A 512-amino-acid chain; its full sequence is Maturase K (512 aa).

It belongs to the intron maturase 2 family. MatK subfamily.

It is found in the plastid. The protein localises to the chloroplast. In terms of biological role, usually encoded in the trnK tRNA gene intron. Probably assists in splicing its own and other chloroplast group II introns. In Alisma canaliculatum (Water plantain), this protein is Maturase K.